Reading from the N-terminus, the 1112-residue chain is Mediator of RNA polymerase II transcription subunit 14 (1112 aa).

3 disordered regions span residues 1-76, 120-141, and 1088-1112; these read MPGV…INES, SPHG…QSPE, and TNSA…ITID. Positions 20 to 39 are enriched in polar residues; sequence SPDNVSSTPFPQERVNQSGD. Basic and acidic residues predominate over residues 64–73; sequence IETHTGKDGI. A compositionally biased stretch (polar residues) spans 1088–1099; sequence TNSAGARSSQQC.

It belongs to the Mediator complex subunit 14 family. Component of the Mediator complex.

The protein localises to the nucleus. Component of the Mediator complex, a coactivator involved in the regulated transcription of nearly all RNA polymerase II-dependent genes. Mediator functions as a bridge to convey information from gene-specific regulatory proteins to the basal RNA polymerase II transcription machinery. Mediator is recruited to promoters by direct interactions with regulatory proteins and serves as a scaffold for the assembly of a functional preinitiation complex with RNA polymerase II and the general transcription factors. This is Mediator of RNA polymerase II transcription subunit 14 (rgr1) from Aspergillus clavatus (strain ATCC 1007 / CBS 513.65 / DSM 816 / NCTC 3887 / NRRL 1 / QM 1276 / 107).